The chain runs to 403 residues: Acetate kinase (403 aa).

Asn-8 provides a ligand contact to Mg(2+). Lys-15 is an ATP binding site. Arg-90 provides a ligand contact to substrate. The active-site Proton donor/acceptor is Asp-147. ATP is bound by residues 207-211 (HLGSG), 282-284 (DLR), and 330-334 (GVGEN). Position 384 (Glu-384) interacts with Mg(2+).

Belongs to the acetokinase family. As to quaternary structure, homodimer. Mg(2+) serves as cofactor. Requires Mn(2+) as cofactor.

It is found in the cytoplasm. The enzyme catalyses acetate + ATP = acetyl phosphate + ADP. Its pathway is metabolic intermediate biosynthesis; acetyl-CoA biosynthesis; acetyl-CoA from acetate: step 1/2. Its function is as follows. Catalyzes the formation of acetyl phosphate from acetate and ATP. Can also catalyze the reverse reaction. This Exiguobacterium sp. (strain ATCC BAA-1283 / AT1b) protein is Acetate kinase.